The following is a 387-amino-acid chain: Peptostreptococcal albumin-binding protein (387 aa).

The first 26 residues, methionine 1–alanine 26, serve as a signal peptide directing secretion. Residues leucine 122–arginine 155 are disordered. The GA module stretch occupies residues threonine 213–alanine 265. Residues glycine 266 to arginine 360 are disordered. Polar residues predominate over residues asparagine 270–glutamine 282. The segment covering glycine 298–arginine 360 has biased composition (basic and acidic residues). Residues leucine 355–glycine 359 carry the LPXTG sorting signal motif. A Pentaglycyl murein peptidoglycan amidated alanine modification is found at alanine 358. A propeptide spans glycine 359–lysine 387 (removed by sortase).

It localises to the secreted. Its subcellular location is the cell wall. In terms of biological role, binds serum albumin. The protein is Peptostreptococcal albumin-binding protein (pab) of Finegoldia magna (Peptostreptococcus magnus).